The primary structure comprises 421 residues: C2H2 type master regulator of conidiophore development brlA (421 aa).

2 consecutive C2H2-type zinc fingers follow at residues 309–333 and 339–364; these read FKCKEPGCKGRFKRQEHLKRHMKSH and HVCWVPGCERAFSRSDNLNAHYTKTH. The disordered stretch occupies residues 379 to 421; the sequence is ESSPDYDPDFRGQLTPDGLPIRGSTLDDPMPNSREYSVDGLDD.

It localises to the nucleus. Its function is as follows. BrlA, abaA and wetA are pivotal regulators of conidiophore development and conidium maturation. They act individually and together to regulate their own expression and that of numerous other sporulation-specific genes. Binds promoters of target genes at brlA response elements (BREs) containing the conserved sequence 5'-(C/A)(A/G)AGGG(G/A)-3'. Required for conidiophores formation. Controls expression of abaA. The protein is C2H2 type master regulator of conidiophore development brlA of Aspergillus oryzae (strain ATCC 42149 / RIB 40) (Yellow koji mold).